The following is a 465-amino-acid chain: Methylenetetrahydrofolate--tRNA-(uracil-5-)-methyltransferase TrmFO (465 aa).

An FAD-binding site is contributed by 3–8 (GAGLAG).

The protein belongs to the MnmG family. TrmFO subfamily. FAD is required as a cofactor.

It localises to the cytoplasm. It carries out the reaction uridine(54) in tRNA + (6R)-5,10-methylene-5,6,7,8-tetrahydrofolate + NADH + H(+) = 5-methyluridine(54) in tRNA + (6S)-5,6,7,8-tetrahydrofolate + NAD(+). The catalysed reaction is uridine(54) in tRNA + (6R)-5,10-methylene-5,6,7,8-tetrahydrofolate + NADPH + H(+) = 5-methyluridine(54) in tRNA + (6S)-5,6,7,8-tetrahydrofolate + NADP(+). In terms of biological role, catalyzes the folate-dependent formation of 5-methyl-uridine at position 54 (M-5-U54) in all tRNAs. The protein is Methylenetetrahydrofolate--tRNA-(uracil-5-)-methyltransferase TrmFO of Bradyrhizobium sp. (strain BTAi1 / ATCC BAA-1182).